Reading from the N-terminus, the 302-residue chain is Ornithine carbamoyltransferase (302 aa).

Carbamoyl phosphate contacts are provided by residues 52-55 (STRT), Gln-79, Arg-103, and 130-133 (HPCQ). Residues Asn-161, Asp-221, and 225–226 (SM) each bind L-ornithine. Carbamoyl phosphate-binding positions include 261–262 (CL) and Arg-289.

Belongs to the aspartate/ornithine carbamoyltransferase superfamily. OTCase family.

Its subcellular location is the cytoplasm. The enzyme catalyses carbamoyl phosphate + L-ornithine = L-citrulline + phosphate + H(+). It participates in amino-acid biosynthesis; L-arginine biosynthesis; L-arginine from L-ornithine and carbamoyl phosphate: step 1/3. Reversibly catalyzes the transfer of the carbamoyl group from carbamoyl phosphate (CP) to the N(epsilon) atom of ornithine (ORN) to produce L-citrulline. This chain is Ornithine carbamoyltransferase, found in Methanosarcina acetivorans (strain ATCC 35395 / DSM 2834 / JCM 12185 / C2A).